We begin with the raw amino-acid sequence, 253 residues long: Zinc finger protein GIS (253 aa).

Over residues 1-10 (MDEATGETET) the composition is skewed to acidic residues. The interval 1 to 85 (MDEATGETET…GDNSTDNNSI (85 aa)) is disordered. 3 stretches are compositionally biased toward polar residues: residues 11–21 (QDFMNVESFSQ), 49–63 (SITTGQEDYTDPYQT), and 76–85 (GDNSTDNNSI). A C2H2-type zinc finger spans residues 91–113 (FECHYCFRNFPTSQALGGHQNAH).

As to expression, expressed in inflorescence meristems, floral meristems and stem epidermis.

Its subcellular location is the nucleus. Its function is as follows. Probable transcription factor required for the initiation of inflorescence trichomes in response to gibberellin (GA). Mediates the induction of GL1 expression by GA in inflorescence organs and is antagonized in its action by the DELLA repressor GAI. Acts upstream of the trichome initiation regulators GL1 and GL3, and downstream of the GA signaling repressor SPINDLY (SPY). Does not play a significant role in the cytokinin response. Controls trichome branching through GA signaling. Acts downstream of the key regulator STICHEL (STI) in an endoreduplication-independent pathway. Controls trichome cell division indirectly by acting downstream of a key endoreduplication regulator SIAMESE (SIM). This Arabidopsis thaliana (Mouse-ear cress) protein is Zinc finger protein GIS (GIS).